A 337-amino-acid chain; its full sequence is DNA-directed RNA polymerase subunit alpha (337 aa).

The tract at residues 1–233 is alpha N-terminal domain (alpha-NTD); sequence MVREKVTVST…DLFIPFLHAQ (233 aa). The alpha C-terminal domain (alpha-CTD) stretch occupies residues 267 to 337; it reads IALKYIFIDQ…FTVDLPKNKF (71 aa).

This sequence belongs to the RNA polymerase alpha chain family. In terms of assembly, in plastids the minimal PEP RNA polymerase catalytic core is composed of four subunits: alpha, beta, beta', and beta''. When a (nuclear-encoded) sigma factor is associated with the core the holoenzyme is formed, which can initiate transcription.

Its subcellular location is the plastid. The protein resides in the chloroplast. It catalyses the reaction RNA(n) + a ribonucleoside 5'-triphosphate = RNA(n+1) + diphosphate. Functionally, DNA-dependent RNA polymerase catalyzes the transcription of DNA into RNA using the four ribonucleoside triphosphates as substrates. The chain is DNA-directed RNA polymerase subunit alpha from Platanus occidentalis (Sycamore).